The primary structure comprises 863 residues: Chromatin assembly factor 1 subunit A (863 aa).

Disordered regions lie at residues 1-353 (MVVV…EEKD), 423-466 (LNGL…PDRS), 513-579 (DSDE…RQRM), and 749-863 (VTRD…PATA). The segment covering 42 to 54 (LNPEPKECNEPKR) has biased composition (basic and acidic residues). Threonine 111 carries the phosphothreonine modification. Serine 118 carries the post-translational modification Phosphoserine. Positions 144–154 (SEGTTEPTIPL) are enriched in low complexity. Acidic residues-rich tracts occupy residues 155–168 (TEEETEKDEAEDVD) and 177–196 (QDSDTEEEEEEEEEEEEQQQ). A compositionally biased stretch (low complexity) spans 205–237 (ESVLSTGSTSSASVIASSPEPSKSAPTTPASTS). Basic and acidic residues-rich tracts occupy residues 254 to 353 (QEQE…EEKD) and 457 to 466 (QKADDGPDRS). Acidic residues-rich tracts occupy residues 513 to 524 (DSDEEWEEEEPG) and 532 to 547 (GDDDDEAGEDDDDDDG). Positions 569–579 (DPEKQKVRQRM) are enriched in basic and acidic residues. The span at 760–771 (NSPTTNSSTTPS) shows a compositional bias: low complexity. Over residues 806 to 815 (DTEDDEDDDC) the composition is skewed to acidic residues. The segment covering 821 to 835 (QSGSSEQDINTSLPQ) has biased composition (polar residues). Low complexity predominate over residues 850 to 863 (TAALALPCPTPATA).

It belongs to the CHAF1A family.

It is found in the nucleus. Acts as a component of the histone chaperone complex chromatin assembly factor 1 (CAF-1), which assembles histone octamers onto DNA during replication and repair. CAF-1 performs the first step of the nucleosome assembly process, bringing newly synthesized histones H3 and H4 to replicating DNA; histones H2A/H2B can bind to this chromatin precursor subsequent to DNA replication to complete the histone octamer. This Danio rerio (Zebrafish) protein is Chromatin assembly factor 1 subunit A (chaf1a).